The sequence spans 1197 residues: DExH-box ATP-dependent RNA helicase DExH3 (1197 aa).

The region spanning 309–476 (LKAIAANQVV…FGGAPAMHIP (168 aa)) is the Helicase ATP-binding domain. 322–329 (GETGCGKT) lines the ATP pocket. The DEIH box signature appears at 423 to 426 (DEIH). In terms of domain architecture, Helicase C-terminal spans 564 to 738 (LIENVLCHIV…SLCLQIKSLG (175 aa)).

Belongs to the DExH box helicase family.

The enzyme catalyses ATP + H2O = ADP + phosphate + H(+). The chain is DExH-box ATP-dependent RNA helicase DExH3 from Arabidopsis thaliana (Mouse-ear cress).